The primary structure comprises 238 residues: Probable transcriptional regulatory protein CTA_0499 (238 aa).

The tract at residues 1–21 (MAGHSKWANTKHRKERADHKK) is disordered. Positions 9–21 (NTKHRKERADHKK) are enriched in basic residues.

The protein belongs to the TACO1 family.

The protein localises to the cytoplasm. The polypeptide is Probable transcriptional regulatory protein CTA_0499 (Chlamydia trachomatis serovar A (strain ATCC VR-571B / DSM 19440 / HAR-13)).